The chain runs to 358 residues: Probable D-xylulose reductase A (358 aa).

Zn(2+)-binding residues include Cys47, His72, and Glu73. 182-187 serves as a coordination point for NAD(+); the sequence is GAGPVG.

The protein belongs to the zinc-containing alcohol dehydrogenase family. Zn(2+) is required as a cofactor.

It carries out the reaction xylitol + NAD(+) = D-xylulose + NADH + H(+). It participates in carbohydrate degradation; L-arabinose degradation via L-arabinitol; D-xylulose 5-phosphate from L-arabinose (fungal route): step 4/5. Xylitol dehydrogenase which catalyzes the conversion of xylitol to D-xylulose. Xylose is a major component of hemicelluloses such as xylan. Most fungi utilize D-xylose via three enzymatic reactions, xylose reductase (XR), xylitol dehydrogenase (XDH), and xylulokinase, to form xylulose 5-phosphate, which enters pentose phosphate pathway. This chain is Probable D-xylulose reductase A (xdhA), found in Aspergillus clavatus (strain ATCC 1007 / CBS 513.65 / DSM 816 / NCTC 3887 / NRRL 1 / QM 1276 / 107).